A 351-amino-acid polypeptide reads, in one-letter code: Holliday junction branch migration complex subunit RuvB (351 aa).

The tract at residues 1–22 (MSDPKANRMVSPERRSDDVGDT) is disordered. The large ATPase domain (RuvB-L) stretch occupies residues 2–185 (SDPKANRMVS…FGIPVRLNFY (184 aa)). ATP contacts are provided by residues Leu-24, Arg-25, Gly-66, Lys-69, Thr-70, Thr-71, 132-134 (EDF), Arg-175, Tyr-185, and Arg-222. Position 70 (Thr-70) interacts with Mg(2+). Residues 186 to 256 (TIEELESIVS…IADHALSALE (71 aa)) are small ATPAse domain (RuvB-S). The interval 259–351 (AAGLDAMDRR…GLFGTDESDD (93 aa)) is head domain (RuvB-H). Positions 295, 314, and 319 each coordinate DNA.

Belongs to the RuvB family. In terms of assembly, homohexamer. Forms an RuvA(8)-RuvB(12)-Holliday junction (HJ) complex. HJ DNA is sandwiched between 2 RuvA tetramers; dsDNA enters through RuvA and exits via RuvB. An RuvB hexamer assembles on each DNA strand where it exits the tetramer. Each RuvB hexamer is contacted by two RuvA subunits (via domain III) on 2 adjacent RuvB subunits; this complex drives branch migration. In the full resolvosome a probable DNA-RuvA(4)-RuvB(12)-RuvC(2) complex forms which resolves the HJ.

It localises to the cytoplasm. It catalyses the reaction ATP + H2O = ADP + phosphate + H(+). The RuvA-RuvB-RuvC complex processes Holliday junction (HJ) DNA during genetic recombination and DNA repair, while the RuvA-RuvB complex plays an important role in the rescue of blocked DNA replication forks via replication fork reversal (RFR). RuvA specifically binds to HJ cruciform DNA, conferring on it an open structure. The RuvB hexamer acts as an ATP-dependent pump, pulling dsDNA into and through the RuvAB complex. RuvB forms 2 homohexamers on either side of HJ DNA bound by 1 or 2 RuvA tetramers; 4 subunits per hexamer contact DNA at a time. Coordinated motions by a converter formed by DNA-disengaged RuvB subunits stimulates ATP hydrolysis and nucleotide exchange. Immobilization of the converter enables RuvB to convert the ATP-contained energy into a lever motion, pulling 2 nucleotides of DNA out of the RuvA tetramer per ATP hydrolyzed, thus driving DNA branch migration. The RuvB motors rotate together with the DNA substrate, which together with the progressing nucleotide cycle form the mechanistic basis for DNA recombination by continuous HJ branch migration. Branch migration allows RuvC to scan DNA until it finds its consensus sequence, where it cleaves and resolves cruciform DNA. This Bradyrhizobium diazoefficiens (strain JCM 10833 / BCRC 13528 / IAM 13628 / NBRC 14792 / USDA 110) protein is Holliday junction branch migration complex subunit RuvB.